Consider the following 4062-residue polypeptide: MDPAMASPGYRSVQSDRSNHLTELETRIQNLADNSQRDDVKLKMLQEIWSTIENHFTLSSHEKVVERLILSFLQVFCNTSPQFIAENNTQQLRKLMLEIILRLSNVEAMKHHSKEIIKQMMRLITVENEENANLAIKIVTDQGRSTGKMQYCGEVSQIMVSFKTMVIDLTASGRAGDMFNIKEHKAPPSTSSDEQVITEYLKTCYYQQTVLLNGTEGKPPLKYNMIPSAHQSTKVLLEVPYLVIFFYQHFKTAIQTEALDFMRLGLDFLNVRVPDEDKLKTNQIITDDFVSAQSRFLSFVNIMAKIPAFMDLIMQNGPLLVSGTMQMLERCPADLISVRREVLMALKYFTSGEMKSKFFPMLPRLIAEEVVLGTGFTAIEHLRVFMYQMLADLLHHMRNSIDYEMITHVIFVFCRTLHDPNNSSQVQIMSARLLNSLAESLCKMDSHDTFQTRDLLIEILESHVAKLKTLAVYHMPILFQQYGTEIDYEYKSYERDAEKPGMNIPKDTIRGVPKRRIRRLSIDSVEELEFLASEPSTSEDADESGGDPNKLPPPTKEGKKTSPEAILTAMSTMTPPPLAIVEARNLVKYIMHTCKFVTGQLRIARPSQDMYHCSKERDLFERLLRYGVMCMDVFVLPTTRNQPQMHSSMRTKDEKDALESLANVFTTIDHAIFREIFEKYMDFLIERIYNRNYPLQLMVNTFLVRNEVPFFASTMLSFLMSRMKLLEVSNDKTMLYVKLFKIIFSAIGANGSGLHGDKMLTSYLPEILKQSTVLALTAREPLNYFLLLRALFRSIGGGAQDILYGKFLQLLPNLLQFLNKLTNLQSCQHRIQMRELFVELCLTVPVRLSSLLPYLPLLMDPLVCAMNGSPNIVTQGLRTLELCVDNLQPEYLLENMLPVRGALMQGLWRVVSKAPDTSSMTAAFRILGKFGGANRKLLNQPQILQVATLGDTVQSYINMEFSRMGLDGNHSIHLPLSELMRVVADQMRYPADMILNPSPAMIPSTHMKKWCMELSKAVLLAGLGSSGSPITPSANLPKIIKKLLEDFDPNNRTTEVYTCPRESDRELFVNALLAMAYGIWNKDGFRHVYSKFFIKVLRQFALIGVLEYIGGNGWMRHAEEEGVLPLCLDSSVMVDALIICLSETSSSFIIAGVMSLRHINETLSLTLPDIDQMSKVPMCKYLMEKVFKLCHGPAWYARSGGINAIGYMIESFPRKFVMDFVIDVVDSIMEVILGTVEEISSGSADSAYDCLKKMMRVYFIKEEGQEEENLTLATIFVSAISKHYFHSNERVREFAIGLMDHCMVHSRLAPSLDKFYYRFKEFFEPELMRVLTTVPTMSLADAGGSLDGVQNYMFNCPDGFDFEKDMDMYKRYLSHLLDIAQTDTFTLNQRNAFKKCETCPSHFLPPFPITTHIDSMRASALQCLVIAYDRMKKQYIDKGIELGDEHKMIEILALRSSKITVDQVYESDESWRRLMTVLLRAVTDRETPEIAEKLHPSLLKVSPISTIIIATFGASYIRNISGAGDDSDSDRHISYNDIMKFKCLVELNPKILVTKMAVNLANQMVKYKMSDKISRILSVPSSFTEEELDDFEAEKMKGIRELDMIGHTVKMLAGCPVTTFTEQIIVDISRFAAHFEYAYSQDVLVNWIDDVTVILNKSPKDVWKFFLSRESILDPARRSFIRRIIVYQSSGPLRQEFMDTPEYFEKLIDLDDEENKDEDERKIWDRDMFAFSIVDRISKSCPEWLISPNSPIPRIKKLFSETEFNERYVVRALTEVKKFQEEIIVKRMTEHKYKVPKLILNTFLRYLRLNIYDYDLFIVIASCFNGNFVTDLSFLREYLETEVIPKVPLQWRRELFLRIMQKFDTDPQTAGTSMQHVKALQYLVIPTLHWAFERYDTDEIVGTAPIDDSDSSMDVDPAGSSDNLVARLTSVIDSHRNYLSDGMVIVFYQLCTLFVQNASEHIHNNNCKKQGGRLRILMLFAWPCLTMYNHQDPTMRYTGFFFLANIIERFTINRKIVLQVFHQLMTTYQQDTRDQIRKAIDILTPALRTRMEDGHLQILSHVKKILIEECHNLQHVQHVFQMVVRNYRVYYHVRLELLTPLLNGVQRALVMPNSVLENWQTRRHAVEICEMVIKWELFRTLKTDHIISDEEALEVDKQLDKLRTASSTDRFDFEEAHNKRDMPDAQRTIIKEHADVIVNMLVRFCMTFHQNSGSSSTSQSGNHGVELTKKCQLLLRAALRPSMWGEFVSFRLTMIEKFLSIPNDNALRNDISSTAYANTIQNAQHTLDMLCNIIPVMPKTSLMTMMRQLQRPLIQCLNNGAQNFKMTRLVTQIVSRLLEKTNVSVNGLDELEQLNQYISRFLHEHFGSLLNCRNLSGPVLGVLGAFSLLRTICGHEPAYLDHLMPSFVKVMERAAKEHLAYVANSQDGNMVKNFFPDVAELLCACMELVRPRVDHISMEIKRSIVGGIIAELIIKSNHDKIIQTSVKLLGAMISTQDMEFTILTVLPLLVRIQSIIVTKFKNCKDLIADYLVVVITVFENSEYRNSEAGSRLWEGFFWGLKSSDPQTREKFSIVWEKTWPHMATVDIAHRMKYIMQNQDWSKFKHAFWLKFALWGMLRTIAKRPTDPNNKRKKVILLNCATPWRTIEYAAKLKDQPMEVETEMKREEPEPMEVDEKDSQDDSKDAGEPKEKEKLTLELLLAGQQELLDEASNYDFADALDTVSQITFALNENQVTSKMWVVLFKSFWSSLSQSEIEDFTALVVPFMSSGVHNNYQTGVQDSVLAVWLEAVGDAVHLPSRLIEFISSKHECWHTGIRLLENHIWTIPKQLNNTLLREMKVAPGLAGDIETLESLGTLYNEISEFDQFAAIWERRAVFPDTMRAMSAMQLGDMELAQSYLEKSMSSTYETLAPTINPNNTSNSEKHVSPIIDKEYDHWMEMYITNCSELLQWQNVADVCNGKDMQHVRGLINAASHIPDWNVVEECKSQIAGCIPPSFHLDYTLFNLMSTVMRMNENSSPTHMKERCKIAIQECTEAHISRWRALPSVVSYGHVKILQAMNLVREIEESTDIRIALLEAPSNKVDQALMGDMKSLMKVFRNRTPTTSDDMGFVSTWYDWRNQIHGMMLQRFEYWDKVGLNVAATGNQSIVPIHSMAQAQLAVAKHAKNLGFHNLTKDLLNKLAGLTAIPMMDAQDKVCTYGKTLRDMANSAADERVKNELLCEALEVLEDVRIDDLQKDQVAALLYHRANIHSVLDQAENADYTFSAASQLVDLQNSVTTTGIKLMKNWGHHLYKRFFSTTVCKETGNNFGRQALACYFIAARVDNDIKARKPIAKILWLSKHLNACGSHEVMNRVIKKQLHSLNLFNWLYWLPQLVTDVRYKPNSNFVLILCKMAAAHPLQVFYHIREAVSVDDIDSVLEEDYTDEQMSMDVSDEDCFADDPPFDRILKICLKYRPTDIRVFHRVLKELDEMNETWVERHLRHAICLKDQMFKDFSEQMDATFNEMQYSEDVTMMTLRWRKQLEEDLVYFQQNYNLDFLEIRNKRKMIVTKGCMGVEKSQIMFEKELSQVFTEPAGMQDEFDFVTNMTNMMVSQLDIHAVDAPRPQGYIRIVLDWIRAIRRRFDRLPRRIPLESSSPYLARFSHRTGCIEMPYDLLNVLRAKNHTLMASNQTGQYISMLSRFEPNFEIVIKGGQVIRKIYIRGQTGKSAAFYLKKSVQDEPTNRVPQMFKHLDHVLQTDRESARRHLHAPTVLQMRVGQKTTLYEVASVQPYAMPPDCTRNYPASQIDIVHPYDVLTATFNGSYYPDDMVLHFFERFAQSSSSIGQPLPTPTNQDGTVAPPRLTEAHHIKNIIYEDFARDMIPFRLLYDYLTARYPDPVMYYAMKKQLLHSLAVLSTIEYHCNLTPMGPDQMMMTMNTGVLSNPSYRFEIRGGRSLHDIQHFGHEVPFRLTPNLSILVGVAQDGDLLWSMAAASKCLMKKEPEVIMRPLVWDEFANNTDCDKSRLQVFACHASNSYINGVASKLRNTNSADAKLRKDDCVSLISRAKDSDNLARMPPTYHAWF.

A disordered region spans residues 531–562; that stretch reads LASEPSTSEDADESGGDPNKLPPPTKEGKKTS. TPR repeat units follow at residues 1346–1379 and 1677–1714; these read LDGV…LLDI and RRSF…DDEE. The span at 2659 to 2670 shows a compositional bias: basic and acidic residues; that stretch reads VETEMKREEPEP. The tract at residues 2659–2692 is disordered; it reads VETEMKREEPEPMEVDEKDSQDDSKDAGEPKEKE. A compositionally biased stretch (acidic residues) spans 2671–2680; it reads MEVDEKDSQD. The span at 2681–2692 shows a compositional bias: basic and acidic residues; it reads DSKDAGEPKEKE. The FAT domain maps to 2800 to 3411; the sequence is LIEFISSKHE…FYHIREAVSV (612 aa). The TPR 3 repeat unit spans residues 2847–2880; the sequence is IETLESLGTLYNEISEFDQFAAIWERRAVFPDTM. The 365-residue stretch at 3682 to 4046 folds into the PI3K/PI4K catalytic domain; it reads EPNFEIVIKG…DCVSLISRAK (365 aa). The interval 3688-3694 is G-loop; sequence VIKGGQV. Positions 3902–3910 are catalytic loop; sequence NLTPMGPDQ. The tract at residues 3922–3950 is activation loop; that stretch reads NPSYRFEIRGGRSLHDIQHFGHEVPFRLT. The 32-residue stretch at 4031-4062 folds into the FATC domain; the sequence is AKLRKDDCVSLISRAKDSDNLARMPPTYHAWF.

The protein belongs to the PI3/PI4-kinase family. TRA1 subfamily. As to quaternary structure, interacts with histone acetyltransferase Tip60 homolog mys-1. Probably a component of a complex with histone acetyltransferase (HAT) activity, at least composed of mys-1 and trr-1. As to expression, expressed in germ cells and somatic cells.

The protein resides in the nucleus. The protein localises to the chromosome. Its function is as follows. Influences germ cell fate in hermaphrodites. Acts downstream of tra-2 and tra-3 and through the Tip60 histone acetyltransferase complex to regulate germ cell fate decisions. Required for spermatogenesis and embryonic development. Acts with tra-2 to promote expression of fog-3 and control male tail development. Involved in the negative regulation of vulval development. Involved in the positive regulation of transcription factor daf-16, probably acting by histone acetylation; thereby modulating stress resistance. Plays a role in acetylation of nucleosomal histone H4, probably acting as a component of the Tip60 histone acetyltransferase complex. The sequence is that of Transcription-associated protein 1 from Caenorhabditis elegans.